The chain runs to 511 residues: UDP-N-acetylhexosamine pyrophosphorylase-like protein 1 (511 aa).

Residues 1–19 (MDRSESAESAESRRRRAEE) are compositionally biased toward basic and acidic residues. The disordered stretch occupies residues 1 to 22 (MDRSESAESAESRRRRAEESGQ). Residues 117-120 (LAGG) carry the Substrate binding motif. UTP-binding positions include 117–120 (LAGG), Lys131, Gln205, and Gly231. Residue Asn232 participates in substrate binding. Position 262 (Asp262) interacts with UTP. Positions 312 to 313 (EY) match the Substrate binding motif. Lys386 lines the UTP pocket. Lys416 is a binding site for substrate.

This sequence belongs to the UDPGP type 1 family.

This chain is UDP-N-acetylhexosamine pyrophosphorylase-like protein 1 (uap1l1), found in Xenopus tropicalis (Western clawed frog).